The following is an 84-amino-acid chain: Phosphoribosylformylglycinamidine synthase subunit PurS (84 aa).

It belongs to the PurS family. As to quaternary structure, homodimer or homotetramer. Part of the FGAM synthase complex composed of 1 PurL, 1 PurQ and 2 PurS subunits.

The protein localises to the cytoplasm. It catalyses the reaction N(2)-formyl-N(1)-(5-phospho-beta-D-ribosyl)glycinamide + L-glutamine + ATP + H2O = 2-formamido-N(1)-(5-O-phospho-beta-D-ribosyl)acetamidine + L-glutamate + ADP + phosphate + H(+). The protein operates within purine metabolism; IMP biosynthesis via de novo pathway; 5-amino-1-(5-phospho-D-ribosyl)imidazole from N(2)-formyl-N(1)-(5-phospho-D-ribosyl)glycinamide: step 1/2. Functionally, part of the phosphoribosylformylglycinamidine synthase complex involved in the purines biosynthetic pathway. Catalyzes the ATP-dependent conversion of formylglycinamide ribonucleotide (FGAR) and glutamine to yield formylglycinamidine ribonucleotide (FGAM) and glutamate. The FGAM synthase complex is composed of three subunits. PurQ produces an ammonia molecule by converting glutamine to glutamate. PurL transfers the ammonia molecule to FGAR to form FGAM in an ATP-dependent manner. PurS interacts with PurQ and PurL and is thought to assist in the transfer of the ammonia molecule from PurQ to PurL. In Bacillus subtilis (strain 168), this protein is Phosphoribosylformylglycinamidine synthase subunit PurS.